A 296-amino-acid chain; its full sequence is Cadherin-4 (296 aa).

Cadherin domains follow at residues 1-101, 102-216, and 217-296; these read NVPE…RPEF, INQV…PPEF, and TTST…MLTI. Over 1 to 296 the chain is Extracellular; it reads NVPENSRGPF…ELNRAFMLTI (296 aa). Asparagine 107 and asparagine 236 each carry an N-linked (GlcNAc...) asparagine glycan.

It localises to the cell membrane. In terms of biological role, cadherins are calcium-dependent cell adhesion proteins. They preferentially interact with themselves in a homophilic manner in connecting cells; cadherins may thus contribute to the sorting of heterogeneous cell types. May play an important role in retinal development. This is Cadherin-4 (Cdh4) from Rattus norvegicus (Rat).